The sequence spans 183 residues: Probable RNA 2'-phosphotransferase (183 aa).

It belongs to the KptA/TPT1 family.

Removes the 2'-phosphate from RNA via an intermediate in which the phosphate is ADP-ribosylated by NAD followed by a presumed transesterification to release the RNA and generate ADP-ribose 1''-2''-cyclic phosphate (APPR&gt;P). May function as an ADP-ribosylase. This Pyrococcus furiosus (strain ATCC 43587 / DSM 3638 / JCM 8422 / Vc1) protein is Probable RNA 2'-phosphotransferase.